Here is a 792-residue protein sequence, read N- to C-terminus: Endonuclease MutS2 (792 aa).

344–351 provides a ligand contact to ATP; the sequence is GPNTGGKT. The Smr domain maps to 716-791; that stretch reads IHLRGLHVEE…GLGVTVVYLE (76 aa).

This sequence belongs to the DNA mismatch repair MutS family. MutS2 subfamily. Homodimer. Binds to stalled ribosomes, contacting rRNA.

Its function is as follows. Endonuclease that is involved in the suppression of homologous recombination and thus may have a key role in the control of bacterial genetic diversity. Functionally, acts as a ribosome collision sensor, splitting the ribosome into its 2 subunits. Detects stalled/collided 70S ribosomes which it binds and splits by an ATP-hydrolysis driven conformational change. Acts upstream of the ribosome quality control system (RQC), a ribosome-associated complex that mediates the extraction of incompletely synthesized nascent chains from stalled ribosomes and their subsequent degradation. Probably generates substrates for RQC. This chain is Endonuclease MutS2, found in Thermomicrobium roseum (strain ATCC 27502 / DSM 5159 / P-2).